The primary structure comprises 818 residues: Phenylalanine--tRNA ligase beta subunit (818 aa).

The region spanning alanine 39–threonine 148 is the tRNA-binding domain. Residues proline 423–serine 498 enclose the B5 domain. The Mg(2+) site is built by aspartate 476, aspartate 482, glutamate 485, and glutamate 486. The FDX-ACB domain occupies serine 724–arginine 817.

It belongs to the phenylalanyl-tRNA synthetase beta subunit family. Type 1 subfamily. In terms of assembly, tetramer of two alpha and two beta subunits. Mg(2+) is required as a cofactor.

The protein resides in the cytoplasm. The enzyme catalyses tRNA(Phe) + L-phenylalanine + ATP = L-phenylalanyl-tRNA(Phe) + AMP + diphosphate + H(+). This chain is Phenylalanine--tRNA ligase beta subunit, found in Rickettsia felis (strain ATCC VR-1525 / URRWXCal2) (Rickettsia azadi).